The primary structure comprises 177 residues: Adenine phosphoribosyltransferase (177 aa).

It belongs to the purine/pyrimidine phosphoribosyltransferase family. Homodimer.

It is found in the cytoplasm. It catalyses the reaction AMP + diphosphate = 5-phospho-alpha-D-ribose 1-diphosphate + adenine. It participates in purine metabolism; AMP biosynthesis via salvage pathway; AMP from adenine: step 1/1. Its function is as follows. Catalyzes a salvage reaction resulting in the formation of AMP, that is energically less costly than de novo synthesis. This is Adenine phosphoribosyltransferase from Anaeromyxobacter sp. (strain Fw109-5).